The primary structure comprises 280 residues: 2,3,4,5-tetrahydropyridine-2,6-dicarboxylate N-succinyltransferase (280 aa).

This sequence belongs to the transferase hexapeptide repeat family.

Its subcellular location is the cytoplasm. It carries out the reaction (S)-2,3,4,5-tetrahydrodipicolinate + succinyl-CoA + H2O = (S)-2-succinylamino-6-oxoheptanedioate + CoA. The protein operates within amino-acid biosynthesis; L-lysine biosynthesis via DAP pathway; LL-2,6-diaminopimelate from (S)-tetrahydrodipicolinate (succinylase route): step 1/3. The protein is 2,3,4,5-tetrahydropyridine-2,6-dicarboxylate N-succinyltransferase of Methylorubrum populi (strain ATCC BAA-705 / NCIMB 13946 / BJ001) (Methylobacterium populi).